We begin with the raw amino-acid sequence, 336 residues long: Phenylalanine--tRNA ligase alpha subunit (336 aa).

Residue Glu255 coordinates Mg(2+).

The protein belongs to the class-II aminoacyl-tRNA synthetase family. Phe-tRNA synthetase alpha subunit type 1 subfamily. As to quaternary structure, tetramer of two alpha and two beta subunits. It depends on Mg(2+) as a cofactor.

The protein resides in the cytoplasm. The enzyme catalyses tRNA(Phe) + L-phenylalanine + ATP = L-phenylalanyl-tRNA(Phe) + AMP + diphosphate + H(+). The sequence is that of Phenylalanine--tRNA ligase alpha subunit from Gemmatimonas aurantiaca (strain DSM 14586 / JCM 11422 / NBRC 100505 / T-27).